The primary structure comprises 348 residues: Phenylalanine--tRNA ligase alpha subunit (348 aa).

Glu-262 serves as a coordination point for Mg(2+).

This sequence belongs to the class-II aminoacyl-tRNA synthetase family. Phe-tRNA synthetase alpha subunit type 1 subfamily. As to quaternary structure, tetramer of two alpha and two beta subunits. Mg(2+) is required as a cofactor.

Its subcellular location is the cytoplasm. The catalysed reaction is tRNA(Phe) + L-phenylalanine + ATP = L-phenylalanyl-tRNA(Phe) + AMP + diphosphate + H(+). The chain is Phenylalanine--tRNA ligase alpha subunit from Streptococcus pneumoniae (strain JJA).